Here is a 705-residue protein sequence, read N- to C-terminus: CAP-Gly domain-containing linker protein 4 (705 aa).

3 ANK repeats span residues 65–101 (TSVSELFAILRQWVPQVQQNIDIIGNEILKRGCNVND), 149–180 (TNMNALHYAAYFDVPELIRVILKTSKPKDVDA), and 186–215 (NFGTALHIAAYNLCAGAVKCLLEQGANPAF). The CAP-Gly 1 domain occupies 303–345 (GTTEFASGQWAGIELDEPEGKNNGSVGKVQYFKCAPKYGIFAP). 2 disordered regions span residues 391 to 410 (MTSKKDSASESTLSLPPGEE) and 431 to 479 (TSSL…ANNS). Over residues 441-452 (PKKQNAISSNKK) the composition is skewed to polar residues. Over residues 455-479 (SKSPSLSSRASAGLNSSATSTANNS) the composition is skewed to low complexity. Positions 505–547 (GTTNFAPGYWYGIELEKPHGKNDGSVGGVQYFSCSPRYGIFAP) constitute a CAP-Gly 2 domain. 2 positions are modified to phosphoserine: Ser557 and Ser609. The CAP-Gly 3 domain maps to 644–686 (GPTDFASGIWLGLELRSAKGKNDGSVGDKRYFTCKPNHGVLVR).

This Homo sapiens (Human) protein is CAP-Gly domain-containing linker protein 4 (CLIP4).